Here is a 212-residue protein sequence, read N- to C-terminus: External core antigen (212 aa).

The first 19 residues, Met-1 to Ala-19, serve as a signal peptide directing secretion. Residues Gly-25–Leu-27 are HBEAG. Residues Leu-172–Cys-212 form a disordered region. A compositionally biased stretch (basic residues) spans Val-178 to Ser-205. The stretch at Ser-184–Pro-190 is one 1; half-length repeat. The interval Ser-184–Gln-206 is 3 X 8 AA repeats of S-P-R-R-R-R-S-Q. Residues Ser-184–Cys-212 constitute a propeptide that is removed on maturation. 2 consecutive repeat copies span residues Ser-191–Gln-198 and Ser-199–Gln-206.

The protein belongs to the orthohepadnavirus precore antigen family. As to quaternary structure, homodimerizes. In terms of processing, phosphorylated. Post-translationally, cleaved by host furin.

The protein resides in the secreted. It is found in the host nucleus. Its function is as follows. May regulate immune response to the intracellular capsid in acting as a T-cell tolerogen, by having an immunoregulatory effect which prevents destruction of infected cells by cytotoxic T-cells. This immune regulation may predispose to chronicity during perinatal infections and prevent severe liver injury during adult infections. This chain is External core antigen, found in Hepatitis B virus genotype D (isolate Germany/1-91/1991) (HBV-D).